Consider the following 1224-residue polypeptide: A disintegrin and metalloproteinase with thrombospondin motifs 16 (1224 aa).

Residues 1 to 24 (MKPRARGWRGLAALWMLLAQVAEQ) form the signal peptide. The propeptide occupies 25–279 (APACAMGPAA…EYKSCLRHKR (255 aa)). The tract at residues 31–53 (GPAAAAPGSPSVPRPPPPAERPG) is disordered. Residues 40-50 (PSVPRPPPPAE) show a composition bias toward pro residues. N156 carries an N-linked (GlcNAc...) asparagine glycan. Positions 247-254 (HFCGRRKK) match the Cysteine switch motif. A Zn(2+)-binding site is contributed by C249. Residues 290–495 (LNVETLVVVD…AQAICLADQP (206 aa)) enclose the Peptidase M12B domain. N-linked (GlcNAc...) asparagine glycosylation is present at N310. Intrachain disulfides connect C366-C417, C392-C399, C411-C490, C450-C474, C518-C543, C529-C550, C538-C569, C563-C574, C598-C635, C602-C640, and C613-C625. A Zn(2+)-binding site is contributed by H433. E434 is a catalytic residue. 2 residues coordinate Zn(2+): H437 and H443. One can recognise a Disintegrin domain in the interval 496–585 (KPVKEYKYPE…KYGDEGPKPT (90 aa)). Residues 586 to 641 (HGHWSDWSSWSPCSRTCGGGVSHRSRLCTNPKPSHGGKFCEGSTRTLKLCNSQKCP) form the TSP type-1 1 domain. Residues N741, N780, N835, N905, and N935 are each glycosylated (N-linked (GlcNAc...) asparagine). Residues 747 to 873 (IHRGLYTKHH…KQPPAQPSYT (127 aa)) form a spacer region. 5 consecutive TSP type-1 domains span residues 874–922 (WAIV…LVPC), 927–987 (CPPS…QSCP), 988–1048 (PAWS…QRCH), 1051–1115 (KKLQ…LPCP), and 1127–1181 (RGSW…HFCP). 3 disulfide bridges follow: C939–C981, C943–C986, and C954–C970. The region spanning 1186–1223 (KDAFCKDYFHWCYLVPQHGMCSHKFYGKQCCKTCSKSN) is the PLAC domain.

Zn(2+) is required as a cofactor. In terms of processing, the precursor is cleaved by a furin endopeptidase. Post-translationally, glycosylated. Can be O-fucosylated by POFUT2 on a serine or a threonine residue found within the consensus sequence C1-X(2)-(S/T)-C2-G of the TSP type-1 repeat domains where C1 and C2 are the first and second cysteine residue of the repeat, respectively. Fucosylated repeats can then be further glycosylated by the addition of a beta-1,3-glucose residue by the glucosyltransferase, B3GALTL. Fucosylation mediates the efficient secretion of ADAMTS family members. Can also be C-glycosylated with one or two mannose molecules on tryptophan residues within the consensus sequence W-X-X-W of the TPRs, and N-glycosylated. These other glycosylations can also facilitate secretion. Expressed in fetal lung and kidney and in adult prostate and ovary.

The protein resides in the secreted. The protein localises to the extracellular space. It localises to the extracellular matrix. The sequence is that of A disintegrin and metalloproteinase with thrombospondin motifs 16 (ADAMTS16) from Homo sapiens (Human).